A 798-amino-acid polypeptide reads, in one-letter code: Nuclear intron maturase 4, mitochondrial (798 aa).

The N-terminal 16 residues, 1–16 (MFRKRNLVLDLLRRCY), are a transit peptide targeting the mitochondrion. The tract at residues 578–665 (VVAPTNAIGR…AAKYRIHENE (88 aa)) is intron maturase type-2. Residues 729-778 (CFVIGCSMAAPAVYTLHAMERQKFPGWKTGFSVCIPSSLNGRRIGLCKQH) form a THAP-type zinc finger.

It belongs to the plant nuclear intron maturase (nMat) family.

It localises to the mitochondrion. The protein localises to the plastid. The protein resides in the chloroplast. Nuclear-encoded maturase required for splicing of group-II introns in mitochondria. Involved in NAD1 pre-mRNA processing and maturation of introns 1, 3 and 4. Necessary for mitochondrial biogenesis during early developmental stages. Essential for respiratory holocomplex I biogenesis in mitochondria. The chain is Nuclear intron maturase 4, mitochondrial from Arabidopsis thaliana (Mouse-ear cress).